Consider the following 205-residue polypeptide: Large ribosomal subunit protein bL21 (205 aa).

Positions 107-137 (APAKKAAAKKEEAPKADTAPKAAAAPTEEAA) are disordered. The segment covering 122-137 (ADTAPKAAAAPTEEAA) has biased composition (low complexity).

The protein belongs to the bacterial ribosomal protein bL21 family. In terms of assembly, part of the 50S ribosomal subunit. Contacts protein L20.

This protein binds to 23S rRNA in the presence of protein L20. The protein is Large ribosomal subunit protein bL21 of Hyphomonas neptunium (strain ATCC 15444).